Consider the following 503-residue polypeptide: ATP synthase subunit alpha (503 aa).

169–176 provides a ligand contact to ATP; the sequence is GDRKTGKT.

Belongs to the ATPase alpha/beta chains family. In terms of assembly, F-type ATPases have 2 components, CF(1) - the catalytic core - and CF(0) - the membrane proton channel. CF(1) has five subunits: alpha(3), beta(3), gamma(1), delta(1), epsilon(1). CF(0) has three main subunits: a(1), b(2) and c(9-12). The alpha and beta chains form an alternating ring which encloses part of the gamma chain. CF(1) is attached to CF(0) by a central stalk formed by the gamma and epsilon chains, while a peripheral stalk is formed by the delta and b chains.

Its subcellular location is the cell membrane. It catalyses the reaction ATP + H2O + 4 H(+)(in) = ADP + phosphate + 5 H(+)(out). With respect to regulation, increases 2-fold following exposure to low pH. Its function is as follows. Produces ATP from ADP in the presence of a proton gradient across the membrane. The alpha chain is a regulatory subunit. This chain is ATP synthase subunit alpha, found in Lactobacillus acidophilus (strain ATCC 700396 / NCK56 / N2 / NCFM).